The following is a 100-amino-acid chain: Large ribosomal subunit protein eL36A (100 aa).

Position 2 is an N-acetylthreonine (T2).

This sequence belongs to the eukaryotic ribosomal protein eL36 family. In terms of assembly, component of the large ribosomal subunit (LSU). Mature yeast ribosomes consist of a small (40S) and a large (60S) subunit. The 40S small subunit contains 1 molecule of ribosomal RNA (18S rRNA) and 33 different proteins (encoded by 57 genes). The large 60S subunit contains 3 rRNA molecules (25S, 5.8S and 5S rRNA) and 46 different proteins (encoded by 81 genes). N-terminally acetylated by acetyltransferase NatA.

The protein localises to the cytoplasm. Functionally, component of the ribosome, a large ribonucleoprotein complex responsible for the synthesis of proteins in the cell. The small ribosomal subunit (SSU) binds messenger RNAs (mRNAs) and translates the encoded message by selecting cognate aminoacyl-transfer RNA (tRNA) molecules. The large subunit (LSU) contains the ribosomal catalytic site termed the peptidyl transferase center (PTC), which catalyzes the formation of peptide bonds, thereby polymerizing the amino acids delivered by tRNAs into a polypeptide chain. The nascent polypeptides leave the ribosome through a tunnel in the LSU and interact with protein factors that function in enzymatic processing, targeting, and the membrane insertion of nascent chains at the exit of the ribosomal tunnel. This chain is Large ribosomal subunit protein eL36A, found in Saccharomyces cerevisiae (strain ATCC 204508 / S288c) (Baker's yeast).